A 455-amino-acid chain; its full sequence is tRNA modification GTPase MnmE (455 aa).

(6S)-5-formyl-5,6,7,8-tetrahydrofolate is bound by residues R26, E86, and R125. The TrmE-type G domain occupies 222-376 (GLKTAIIGRP…VEEKINQIFF (155 aa)). N232 lines the K(+) pocket. GTP contacts are provided by residues 232–237 (NVGKSS), 251–257 (TDIAGTT), and 276–279 (DTAG). S236 serves as a coordination point for Mg(2+). K(+)-binding residues include T251, I253, and T256. T257 serves as a coordination point for Mg(2+). Residue K455 coordinates (6S)-5-formyl-5,6,7,8-tetrahydrofolate.

This sequence belongs to the TRAFAC class TrmE-Era-EngA-EngB-Septin-like GTPase superfamily. TrmE GTPase family. In terms of assembly, homodimer. Heterotetramer of two MnmE and two MnmG subunits. K(+) is required as a cofactor.

It localises to the cytoplasm. In terms of biological role, exhibits a very high intrinsic GTPase hydrolysis rate. Involved in the addition of a carboxymethylaminomethyl (cmnm) group at the wobble position (U34) of certain tRNAs, forming tRNA-cmnm(5)s(2)U34. The chain is tRNA modification GTPase MnmE from Lactococcus lactis subsp. lactis (strain IL1403) (Streptococcus lactis).